A 109-amino-acid chain; its full sequence is Nucleoid-associated protein CGSHiEE_00780 (109 aa).

It belongs to the YbaB/EbfC family. As to quaternary structure, homodimer.

The protein resides in the cytoplasm. It localises to the nucleoid. In terms of biological role, binds to DNA and alters its conformation. May be involved in regulation of gene expression, nucleoid organization and DNA protection. In Haemophilus influenzae (strain PittEE), this protein is Nucleoid-associated protein CGSHiEE_00780.